Reading from the N-terminus, the 79-residue chain is Sulfur carrier protein TusA (79 aa).

Residue Cys-15 is the Cysteine persulfide intermediate of the active site.

Belongs to the sulfur carrier protein TusA family. In terms of assembly, interacts with IscS.

It is found in the cytoplasm. Its pathway is tRNA modification. Sulfur carrier protein involved in sulfur trafficking in the cell. Part of a sulfur-relay system required for 2-thiolation during synthesis of 2-thiouridine of the modified wobble base 5-methylaminomethyl-2-thiouridine (mnm(5)s(2)U) in tRNA. Interacts with IscS and stimulates its cysteine desulfurase activity. Accepts an activated sulfur from IscS, which is then transferred to TusD, and thus determines the direction of sulfur flow from IscS to 2-thiouridine formation. Also appears to be involved in sulfur transfer for the biosynthesis of molybdopterin. The chain is Sulfur carrier protein TusA from Buchnera aphidicola subsp. Baizongia pistaciae (strain Bp).